Reading from the N-terminus, the 455-residue chain is MASFSILSIFKIGVGPSSSHTIGPMEAGARFCESLKGILEQVVRVQITLHGSLALTGKGHLSDEAVLIGLHGIYANELEVTTKKALLHEALENKVLKLANQHHIPFDYAKDLIFDNKPLTRHQNALILKAFNSKNEVLKEETYYSVGGGFVYTEKELDNLSEEDGNESIAYDFSSAKELLELCQKHQKSIAEIVRLRENALKNHPDATMVKIYHAMLECYDNGANSKERYLPGSLKVTRLAPSIKTRLEKHPTSGKDPLALIDYISLYARAIAEENASGGKVVTAPTNGACAVVPSVLLYAKNHLFENLSQKAINDFLLTSAAIGYLYKKNASLSGAEAGCQAEIGVASSMAAGGLAHLCQATTQQVLIASEIAMEHHLGLTCDPVGGLVQIPCIERNVLGAIKAISASKLALEDEYKPKVSLDEVIATMYATGKDMNEKYKETSLGGLAKTLKC.

The protein belongs to the iron-sulfur dependent L-serine dehydratase family. [4Fe-4S] cluster serves as cofactor.

It carries out the reaction L-serine = pyruvate + NH4(+). Its pathway is carbohydrate biosynthesis; gluconeogenesis. The sequence is that of L-serine dehydratase (sdaA) from Helicobacter pylori (strain ATCC 700392 / 26695) (Campylobacter pylori).